Consider the following 1456-residue polypeptide: Leucine-rich repeat-containing protein 9 (1456 aa).

8 LRR repeats span residues 53 to 78 (FHNLSSLTIVAQDIREISGLETCLQL), 97 to 119 (CRNLEKLYLYYNKISKIENLEKL), 120 to 141 (IKLEVLWLNHNMIKNIEGLQTL), 142 to 164 (KNLKDLNLAGNLVSSIGRCLDPN), 166 to 188 (QLEKLNLSGNQITSFKDLTNLTK), 190 to 212 (TRLKDLCLNDPQYKSNPVCQLCN), 224 to 248 (LQRLDTFDVSAKQIKELADSTAMKK), and 264 to 287 (NEELEKLNDRKCKLQKLPEERIKL). The segment at 305-325 (SSKGQSDTTPEAEKPRNSEVV) is disordered. The LRR 9 repeat unit spans residues 339-362 (LSALDDRVTFWNKKLHEIEAIYRT). Tyr525 is modified (phosphotyrosine). 23 LRR repeats span residues 661–683 (KPRPKLISLDEKTIISLAKTNIY), 684–705 (SHIVNLNLHGNSLSKLRDLAKL), 706–727 (TGLRKLNISFNEFTCLDDVYHL), 729–748 (NLEYLDASHNHVITLEGFRG), 749–772 (LMKLKHLDLSWNQLKKTGEEINVL), 776–802 (TTSLLTLDIQHNPWQKPATLRLSVIGR), 806–833 (LTHLDGLVISEEETRAALKFISGTKITQ), 876–898 (YSKITALNLDGQHLFEITNLEKL), 899–920 (ENLKWASFSNNNLSKMEGLESC), 921–942 (VNLEELTLDGNCISKIEGITRL), 943–965 (TKLSRLSMNNNLLTGLEKHTFDN), 967–991 (LHLHSLSLENNRITSLSALQKTFTL), 993–1010 (ELYISNNYIAVNQEIYNL), 1013–1037 (LCNLVILDMYGNIIIWNQENYRFFV), 1082–1105 (FIQMQELNWTSSAIRTVDLIPVDH), 1106–1128 (FRNVSNVNLQNNNLTSFSGLIYL), 1129–1151 (PNVKVLCLNYNHIESIMPRLKPQ), 1191–1214 (MQSLEVLHLGYNGICNLVQLQLNR), 1215–1237 (LRNLKFLFLQGNEISQVEGLDNL), 1238–1260 (IVLQELVVDHNRIRAFNDTAFSK), 1262–1283 (SSLLMLHLEENRLRELSKLQSL), 1284–1307 (VKLEKLFLGYNKIQDITELEKLDV), and 1309–1335 (PSLRELTVYGNPICRKMVHRHVLIFRL).

The polypeptide is Leucine-rich repeat-containing protein 9 (Lrrc9) (Mus musculus (Mouse)).